We begin with the raw amino-acid sequence, 167 residues long: Chorion class CB protein PC404 (167 aa).

The tract at residues 1–55 (IGREAIVGAGLQGPFGGPWPYDALSPFDMPYGPALPAMSCGAGSFGPSSGFAPAA) is left arm. The tract at residues 56–126 (AYGGGLAVTS…GDGAVGIVAE (71 aa)) is central domain. The right arm stretch occupies residues 127–167 (TPFASTSVNPAYGYGGAIGGGVPYNSYGPIGYGGCGYNALY).

This sequence belongs to the chorion protein family.

In terms of biological role, this protein is one of many from the eggshell of the silk moth. The protein is Chorion class CB protein PC404 of Antheraea polyphemus (Polyphemus moth).